The chain runs to 258 residues: Aspartate/glutamate leucyltransferase (258 aa).

Belongs to the R-transferase family. Bpt subfamily.

It is found in the cytoplasm. It carries out the reaction N-terminal L-glutamyl-[protein] + L-leucyl-tRNA(Leu) = N-terminal L-leucyl-L-glutamyl-[protein] + tRNA(Leu) + H(+). It catalyses the reaction N-terminal L-aspartyl-[protein] + L-leucyl-tRNA(Leu) = N-terminal L-leucyl-L-aspartyl-[protein] + tRNA(Leu) + H(+). Functionally, functions in the N-end rule pathway of protein degradation where it conjugates Leu from its aminoacyl-tRNA to the N-termini of proteins containing an N-terminal aspartate or glutamate. This chain is Aspartate/glutamate leucyltransferase, found in Bradyrhizobium sp. (strain BTAi1 / ATCC BAA-1182).